A 168-amino-acid chain; its full sequence is Crossover junction endodeoxyribonuclease RuvC (168 aa).

Active-site residues include Asp8, Glu68, and Asp140. Positions 8, 68, and 140 each coordinate Mg(2+).

The protein belongs to the RuvC family. In terms of assembly, homodimer which binds Holliday junction (HJ) DNA. The HJ becomes 2-fold symmetrical on binding to RuvC with unstacked arms; it has a different conformation from HJ DNA in complex with RuvA. In the full resolvosome a probable DNA-RuvA(4)-RuvB(12)-RuvC(2) complex forms which resolves the HJ. Mg(2+) is required as a cofactor.

It localises to the cytoplasm. The catalysed reaction is Endonucleolytic cleavage at a junction such as a reciprocal single-stranded crossover between two homologous DNA duplexes (Holliday junction).. The RuvA-RuvB-RuvC complex processes Holliday junction (HJ) DNA during genetic recombination and DNA repair. Endonuclease that resolves HJ intermediates. Cleaves cruciform DNA by making single-stranded nicks across the HJ at symmetrical positions within the homologous arms, yielding a 5'-phosphate and a 3'-hydroxyl group; requires a central core of homology in the junction. The consensus cleavage sequence is 5'-(A/T)TT(C/G)-3'. Cleavage occurs on the 3'-side of the TT dinucleotide at the point of strand exchange. HJ branch migration catalyzed by RuvA-RuvB allows RuvC to scan DNA until it finds its consensus sequence, where it cleaves and resolves the cruciform DNA. This is Crossover junction endodeoxyribonuclease RuvC from Gluconacetobacter diazotrophicus (strain ATCC 49037 / DSM 5601 / CCUG 37298 / CIP 103539 / LMG 7603 / PAl5).